We begin with the raw amino-acid sequence, 345 residues long: Heat-inducible transcription repressor HrcA (345 aa).

Belongs to the HrcA family.

Functionally, negative regulator of class I heat shock genes (grpE-dnaK-dnaJ and groELS operons). Prevents heat-shock induction of these operons. The chain is Heat-inducible transcription repressor HrcA from Listeria monocytogenes serotype 1/2a (strain 10403S).